The sequence spans 95 residues: Aspartyl/glutamyl-tRNA(Asn/Gln) amidotransferase subunit C (95 aa).

It belongs to the GatC family. In terms of assembly, heterotrimer of A, B and C subunits.

The catalysed reaction is L-glutamyl-tRNA(Gln) + L-glutamine + ATP + H2O = L-glutaminyl-tRNA(Gln) + L-glutamate + ADP + phosphate + H(+). The enzyme catalyses L-aspartyl-tRNA(Asn) + L-glutamine + ATP + H2O = L-asparaginyl-tRNA(Asn) + L-glutamate + ADP + phosphate + 2 H(+). Allows the formation of correctly charged Asn-tRNA(Asn) or Gln-tRNA(Gln) through the transamidation of misacylated Asp-tRNA(Asn) or Glu-tRNA(Gln) in organisms which lack either or both of asparaginyl-tRNA or glutaminyl-tRNA synthetases. The reaction takes place in the presence of glutamine and ATP through an activated phospho-Asp-tRNA(Asn) or phospho-Glu-tRNA(Gln). This is Aspartyl/glutamyl-tRNA(Asn/Gln) amidotransferase subunit C from Bartonella quintana (strain Toulouse) (Rochalimaea quintana).